The chain runs to 338 residues: Isopenicillin N synthase (338 aa).

Arg89, Tyr93, Ser185, and Tyr191 together coordinate isopenicillin N. Residues Arg89, Tyr93, Ser185, Tyr191, His216, and Asp218 each coordinate N-[(5S)-5-amino-5-carboxypentanoyl]-L-cysteinyl-D-valine. The Fe2OG dioxygenase domain maps to 182 to 290 (TLSSVVLIRY…RQSLPFFVNL (109 aa)). Fe(2+) is bound by residues His216, Asp218, and His272. Position 281 (Arg281) interacts with 2-oxoglutarate. Ser283 serves as a coordination point for isopenicillin N. Position 283 (Ser283) interacts with N-[(5S)-5-amino-5-carboxypentanoyl]-L-cysteinyl-D-valine.

It belongs to the iron/ascorbate-dependent oxidoreductase family. In terms of assembly, monomer. It depends on Fe(2+) as a cofactor.

Its subcellular location is the cytoplasm. The protein resides in the cytosol. It catalyses the reaction N-[(5S)-5-amino-5-carboxypentanoyl]-L-cysteinyl-D-valine + O2 = isopenicillin N + 2 H2O. It participates in antibiotic biosynthesis; penicillin G biosynthesis; penicillin G from L-alpha-aminoadipate and L-cysteine and L-valine: step 2/3. Isopenicillin N synthase; part of the gene cluster that mediates the biosynthesis of penicillin, the world's most important antibiotic. IpnA catalyzes the cyclization of the tripeptide N-[(5S)-5-amino-5-carboxypentanoyl]-L-cysteinyl-D-valine (LLD-ACV or ACV) to form isopenicillin N (IPN) that contains the beta-lactam nucleus. The penicillin biosynthesis occurs via 3 enzymatic steps, the first corresponding to the production of the tripeptide N-[(5S)-5-amino-5-carboxypentanoyl]-L-cysteinyl-D-valine (LLD-ACV or ACV) by the NRPS pcbAB. The tripeptide ACV is then cyclized to isopenicillin N (IPN) by the isopenicillin N synthase pcbC that forms the beta-lactam nucleus. Finally, the alpha-aminoadipyl side chain is exchanged for phenylacetic acid by the isopenicillin N acyltransferase penDE to yield penicillin in the peroxisomal matrix. In Hapsidospora chrysogena (Acremonium chrysogenum), this protein is Isopenicillin N synthase (PCBC).